Reading from the N-terminus, the 208-residue chain is Porimin (208 aa).

An N-terminal signal peptide occupies residues Met1 to Ala26. Residues His27–Thr166 lie on the Extracellular side of the membrane. Positions Gly42 to His57 are enriched in polar residues. A disordered region spans residues Gly42 to Thr125. Residues Asn46, Asn50, Asn64, Asn68, Asn83, Asn96, and Asn106 are each glycosylated (N-linked (GlcNAc...) asparagine). Residues Glu65–Met107 show a composition bias toward polar residues. Positions Thr108 to Ser122 are enriched in low complexity. N-linked (GlcNAc...) asparagine glycans are attached at residues Asn124 and Asn138. Residues Gly167 to Cys187 traverse the membrane as a helical segment. Over Lys188 to Ile208 the chain is Cytoplasmic.

This sequence belongs to the CD164 family. In terms of tissue distribution, ubiquitous. Not expressed in ovary. Expressed in keratinocytes.

The protein localises to the membrane. In terms of biological role, implicated in oncotic cell death, characterized by cell swelling, organelle swelling, vacuolization and increased membrane permeability. The polypeptide is Porimin (TMEM123) (Homo sapiens (Human)).